A 185-amino-acid polypeptide reads, in one-letter code: Biofilm operon icaADBC HTH-type negative transcriptional regulator IcaR (185 aa).

Residues 1–59 (MKDKIIDNAITLFSEKGYDGTTLDDISKSVNIKKASLYYHYDNKEEIYRKSVENCFNYF) enclose the HTH tetR-type domain. Positions 22-41 (TLDDISKSVNIKKASLYYHY) form a DNA-binding region, H-T-H motif.

In terms of assembly, homodimer.

In terms of biological role, represses transcription of the icaADBC operon necessary for biofilm production. The polypeptide is Biofilm operon icaADBC HTH-type negative transcriptional regulator IcaR (icaR) (Staphylococcus epidermidis (strain ATCC 35984 / DSM 28319 / BCRC 17069 / CCUG 31568 / BM 3577 / RP62A)).